A 190-amino-acid chain; its full sequence is Female-specific histamine-binding protein 2 (190 aa).

The signal sequence occupies residues 1-19 (MKLLILSLALVLALSQVKG). 12 residues coordinate histamine: Ser39, Asp43, Tyr55, Asp58, Trp61, Glu101, Phe117, Tyr119, Phe127, Asp139, Glu154, and Trp156. Cystine bridges form between Cys67–Cys188 and Cys138–Cys167.

This sequence belongs to the calycin superfamily. Histamine-binding salivary protein family. Monomer. In terms of tissue distribution, expressed in salivary glands.

The protein localises to the secreted. In terms of biological role, salivary tick protein that acts by scavenging histamine at the wound site, outcompeting histamine receptors for histamine, thereby overcoming host inflammatory responses. Binds histamine with a high-affinity (Kd=1.7 nM). Contains two binding histamine sites (H and L), that appear to bind histamine with differing affinities (high and low). The protein is Female-specific histamine-binding protein 2 of Rhipicephalus appendiculatus (Brown ear tick).